A 103-amino-acid chain; its full sequence is MIVTTTSTIQGKEIIDYVDIVNGEAIMGANIVRDLFASVRDVVGGRSGAYESKLKEARDIAMEEMKTLARQKNANAIVGIDVDYEVVREGMLMVAVSGTAVRI.

It belongs to the UPF0145 family.

This chain is UPF0145 protein BC_5181, found in Bacillus cereus (strain ATCC 14579 / DSM 31 / CCUG 7414 / JCM 2152 / NBRC 15305 / NCIMB 9373 / NCTC 2599 / NRRL B-3711).